A 376-amino-acid polypeptide reads, in one-letter code: Histidinol-phosphate aminotransferase (376 aa).

Residues 1 to 21 (MQPRDLSAHEPYVPGRGTKEV) form a disordered region. An N6-(pyridoxal phosphate)lysine modification is found at Lys-222.

Belongs to the class-II pyridoxal-phosphate-dependent aminotransferase family. Histidinol-phosphate aminotransferase subfamily. Requires pyridoxal 5'-phosphate as cofactor.

The catalysed reaction is L-histidinol phosphate + 2-oxoglutarate = 3-(imidazol-4-yl)-2-oxopropyl phosphate + L-glutamate. Its pathway is amino-acid biosynthesis; L-histidine biosynthesis; L-histidine from 5-phospho-alpha-D-ribose 1-diphosphate: step 7/9. The sequence is that of Histidinol-phosphate aminotransferase from Haloquadratum walsbyi (strain DSM 16790 / HBSQ001).